The chain runs to 321 residues: Methionine import ATP-binding protein MetN (321 aa).

The ABC transporter domain maps to 2 to 237 (ISIKNVNKYY…NTKGLRKLIG (236 aa)). Position 34 to 41 (34 to 41 (GHSGAGKS)) interacts with ATP.

It belongs to the ABC transporter superfamily. Methionine importer (TC 3.A.1.24) family. In terms of assembly, the complex is composed of two ATP-binding proteins (MetN), two transmembrane proteins (MetI) and a solute-binding protein (MetQ).

Its subcellular location is the cell membrane. It catalyses the reaction L-methionine(out) + ATP + H2O = L-methionine(in) + ADP + phosphate + H(+). The enzyme catalyses D-methionine(out) + ATP + H2O = D-methionine(in) + ADP + phosphate + H(+). Functionally, part of the ABC transporter complex MetNIQ involved in methionine import. Responsible for energy coupling to the transport system. The sequence is that of Methionine import ATP-binding protein MetN from Clostridioides difficile (strain 630) (Peptoclostridium difficile).